The sequence spans 197 residues: Ribonuclease HII (197 aa).

The 191-residue stretch at 7–197 (LGIAGVDEVG…SFLRKLFATV (191 aa)) folds into the RNase H type-2 domain. Residues D13, E14, and D109 each contribute to the a divalent metal cation site.

Belongs to the RNase HII family. Requires Mn(2+) as cofactor. Mg(2+) is required as a cofactor.

It localises to the cytoplasm. The catalysed reaction is Endonucleolytic cleavage to 5'-phosphomonoester.. Its function is as follows. Endonuclease that specifically degrades the RNA of RNA-DNA hybrids. This Synechococcus sp. (strain CC9311) protein is Ribonuclease HII.